A 183-amino-acid polypeptide reads, in one-letter code: UPF0316 protein GTNG_0803 (183 aa).

The next 3 helical transmembrane spans lie at 5-25, 33-53, and 59-79; these read IVLV…RTIF, LAAF…SIVF, and YIVM…LEDI.

The protein belongs to the UPF0316 family.

It localises to the cell membrane. The chain is UPF0316 protein GTNG_0803 from Geobacillus thermodenitrificans (strain NG80-2).